Reading from the N-terminus, the 353-residue chain is H(2)-forming methylenetetrahydromethanopterin dehydrogenase-related protein MJ1338 (353 aa).

The protein belongs to the HMD family.

In Methanocaldococcus jannaschii (strain ATCC 43067 / DSM 2661 / JAL-1 / JCM 10045 / NBRC 100440) (Methanococcus jannaschii), this protein is H(2)-forming methylenetetrahydromethanopterin dehydrogenase-related protein MJ1338.